The following is a 266-amino-acid chain: Stomatin homolog PH1511 (266 aa).

A helical membrane pass occupies residues 7 to 27; it reads FFVTSIILLFILIFLASAIKI. 2 coiled-coil regions span residues 125–152 and 178–213; these read GQAH…EATD and RQAE…ISEH.

Belongs to the band 7/mec-2 family. In terms of assembly, homotrimer. Interacts with PH1510 and is cleaved by PH1510.

It is found in the membrane. In Pyrococcus horikoshii (strain ATCC 700860 / DSM 12428 / JCM 9974 / NBRC 100139 / OT-3), this protein is Stomatin homolog PH1511.